A 144-amino-acid polypeptide reads, in one-letter code: Large ribosomal subunit protein uL16 (144 aa).

This sequence belongs to the universal ribosomal protein uL16 family. As to quaternary structure, part of the 50S ribosomal subunit.

Its function is as follows. Binds 23S rRNA and is also seen to make contacts with the A and possibly P site tRNAs. This Latilactobacillus sakei subsp. sakei (strain 23K) (Lactobacillus sakei subsp. sakei) protein is Large ribosomal subunit protein uL16.